The following is a 187-amino-acid chain: Ribonuclease HII (187 aa).

Residues 1–187 (MIILGIDEAG…YKPVQVLLNE (187 aa)) enclose the RNase H type-2 domain. A divalent metal cation contacts are provided by D7, E8, and D99.

Belongs to the RNase HII family. The cofactor is Mn(2+). Mg(2+) serves as cofactor.

Its subcellular location is the cytoplasm. It carries out the reaction Endonucleolytic cleavage to 5'-phosphomonoester.. In terms of biological role, endonuclease that specifically degrades the RNA of RNA-DNA hybrids. This is Ribonuclease HII from Francisella tularensis subsp. mediasiatica (strain FSC147).